We begin with the raw amino-acid sequence, 1079 residues long: Integrator complex subunit 3 homolog (1079 aa).

Disordered stretches follow at residues 539-574, 925-949, and 1010-1079; these read ESSE…DDLP, YPSS…TPSA, and AVGR…NDSD. The span at 938–949 shows a compositional bias: low complexity; that stretch reads KGSSAASSTPSA. S1049, S1050, S1054, and S1055 each carry phosphoserine. The segment covering 1062-1073 has biased composition (basic residues); that stretch reads HKITQAAKKRKK.

It belongs to the Integrator subunit 3 family. As to quaternary structure, belongs to the multiprotein complex Integrator, at least composed of IntS1, IntS2, IntS3, IntS4, omd/IntS5, IntS6, defl/IntS7, IntS8, IntS9, IntS10, IntS11, IntS12, asun/IntS13, IntS14 and IntS15. The core complex associates with protein phosphatase 2A subunits mts/PP2A and Pp2A-29B, to form the Integrator-PP2A (INTAC) complex.

It localises to the nucleus. Its subcellular location is the cytoplasm. Its function is as follows. Component of the integrator complex, a multiprotein complex that terminates RNA polymerase II (Pol II) transcription in the promoter-proximal region of genes. The integrator complex provides a quality checkpoint during transcription elongation by driving premature transcription termination of transcripts that are unfavorably configured for transcriptional elongation: the complex terminates transcription by (1) catalyzing dephosphorylation of the C-terminal domain (CTD) of Pol II subunit Polr2A/Rbp1 and Spt5, and (2) degrading the exiting nascent RNA transcript via endonuclease activity. The integrator complex is also involved in the 3'-end processing of the U7 snRNA, and also the spliceosomal snRNAs U1, U2, U4 and U5. This is Integrator complex subunit 3 homolog (IntS3) from Drosophila virilis (Fruit fly).